The sequence spans 82 residues: Sulfur carrier protein TusA (82 aa).

The active-site Cysteine persulfide intermediate is Cys-20.

The protein belongs to the sulfur carrier protein TusA family.

It localises to the cytoplasm. Functionally, sulfur carrier protein which probably makes part of a sulfur-relay system. This is Sulfur carrier protein TusA from Aeromonas hydrophila subsp. hydrophila (strain ATCC 7966 / DSM 30187 / BCRC 13018 / CCUG 14551 / JCM 1027 / KCTC 2358 / NCIMB 9240 / NCTC 8049).